The following is a 528-amino-acid chain: Ankyrin repeat and death domain-containing protein 1B (528 aa).

ANK repeat units lie at residues 67–96 (PNERSFQNAAKSNNLDLMEKLFEKKVNINV), 100–129 (MNRTALHFAVGRNHLSAVDFLLKHKARVDV), 133–162 (HGLTVIHLAAWSGSLEVMLMLVKAGADQRA), 166–197 (DGMSALHFATQSNHVRIVEYLIQDLHLKDLNQ), 201–230 (KGRKPFLLAAERGHVEMIEKLTFLNLHTSE), 234–263 (GGNTALHLAAKHGHSPAVQVLLAQWQDINE), 267–296 (LNISSLQIATRNGHASLVNFLLSENVDLHQ), 300–329 (PKESPLHLVVINNHITVVNSLLSAQHDIDI), 333–362 (KQQTPLHVAADRGNVELVETLLKAGCDLKA), and 366–395 (QGKTALAVASRSNHSLVVGMLIKAERYYAW). Residues 427–515 (TLLWDLAYHQ…KLAEKTRHFK (89 aa)) form the Death domain.

This chain is Ankyrin repeat and death domain-containing protein 1B (ANKDD1B), found in Homo sapiens (Human).